Reading from the N-terminus, the 189-residue chain is Probable chorismate pyruvate-lyase (189 aa).

Residues Arg-77, Leu-115, and Glu-174 each contribute to the substrate site.

This sequence belongs to the UbiC family.

The protein resides in the cytoplasm. It carries out the reaction chorismate = 4-hydroxybenzoate + pyruvate. It functions in the pathway cofactor biosynthesis; ubiquinone biosynthesis. Removes the pyruvyl group from chorismate, with concomitant aromatization of the ring, to provide 4-hydroxybenzoate (4HB) for the ubiquinone pathway. The chain is Probable chorismate pyruvate-lyase from Shewanella sp. (strain MR-7).